The chain runs to 378 residues: MHLTHLSLVDFRSYPSLDLTLGPGVVTLVGRNGQGKTNLIEAIGYVATLASHRVSADAPLVRQGASHAVVRARIVRGDRAALVELEIVPGRANRARLNRAPVPRPRDVLGLLCTVLFAPEDLALVKGDPAGRRQFLDELLVARTPRMAAVLADYDRVLKQRSTLLRTAGAARRAGGKGDLRTLDVWDGYLASYGAELLTARLALVEALRPGVAGAYAAVAGAQAAVGFEYRASVPQPAPDPVRPDRERWEEAIRAELVAARPREIERGQTLVGPHRDDLLLTVDGLPARGYASHGESWSLALALRLASFELLRADDREPVLLLDDVFAELDVQRRSRLAELVAPAEQVLVTAAVEADVPAELTGTRYVVAAGEVLRAS.

30–37 contributes to the ATP binding site; sequence GRNGQGKT.

Belongs to the RecF family.

The protein resides in the cytoplasm. Functionally, the RecF protein is involved in DNA metabolism; it is required for DNA replication and normal SOS inducibility. RecF binds preferentially to single-stranded, linear DNA. It also seems to bind ATP. This Frankia alni (strain DSM 45986 / CECT 9034 / ACN14a) protein is DNA replication and repair protein RecF.